The sequence spans 120 residues: Large ribosomal subunit protein uL29 (120 aa).

Belongs to the universal ribosomal protein uL29 family. As to quaternary structure, component of the large ribosomal subunit. Mature ribosomes consist of a small (40S) and a large (60S) subunit. The 40S subunit contains about 32 different proteins and 1 molecule of RNA (18S). The 60S subunit contains 45 different proteins and 3 molecules of RNA (25S, 5.8S and 5S).

It is found in the cytoplasm. Component of the ribosome, a large ribonucleoprotein complex responsible for the synthesis of proteins in the cell. The small ribosomal subunit (SSU) binds messenger RNAs (mRNAs) and translates the encoded message by selecting cognate aminoacyl-transfer RNA (tRNA) molecules. The large subunit (LSU) contains the ribosomal catalytic site termed the peptidyl transferase center (PTC), which catalyzes the formation of peptide bonds, thereby polymerizing the amino acids delivered by tRNAs into a polypeptide chain. The nascent polypeptides leave the ribosome through a tunnel in the LSU and interact with protein factors that function in enzymatic processing, targeting, and the membrane insertion of nascent chains at the exit of the ribosomal tunnel. The sequence is that of Large ribosomal subunit protein uL29 from Candida albicans (strain SC5314 / ATCC MYA-2876) (Yeast).